The sequence spans 865 residues: Protein translocase subunit SecA (865 aa).

ATP is bound by residues Q93, 111–115 (GEGKT), and D501. Zn(2+) contacts are provided by C841, C843, C852, and C853.

The protein belongs to the SecA family. In terms of assembly, monomer and homodimer. Part of the essential Sec protein translocation apparatus which comprises SecA, SecYEG and auxiliary proteins SecDF-YajC and YidC. Zn(2+) serves as cofactor.

It is found in the cell inner membrane. The protein resides in the cytoplasm. It carries out the reaction ATP + H2O + cellular proteinSide 1 = ADP + phosphate + cellular proteinSide 2.. Its function is as follows. Part of the Sec protein translocase complex. Interacts with the SecYEG preprotein conducting channel. Has a central role in coupling the hydrolysis of ATP to the transfer of proteins into and across the cell membrane, serving as an ATP-driven molecular motor driving the stepwise translocation of polypeptide chains across the membrane. The polypeptide is Protein translocase subunit SecA (Helicobacter pylori (strain G27)).